Consider the following 147-residue polypeptide: Large ribosomal subunit protein bL9 (147 aa).

The protein belongs to the bacterial ribosomal protein bL9 family.

Its function is as follows. Binds to the 23S rRNA. This is Large ribosomal subunit protein bL9 from Nitratiruptor sp. (strain SB155-2).